Here is a 193-residue protein sequence, read N- to C-terminus: MASLYFTYSAMNAGKSTSLLQVAHNYEERQQHVLLMTPALDDRAGKGRIASRLGIGRDAVSFTHRTDLAAVVRARYMQQAIDCVLIDEAQFLSEEQVWQLSSLADTDNIPVMCYGIRTDAFGNAFPGSAVLLAIADKLVEMKTICHCGRKATMSLRVDEQGNAIRMGQQIAIGGNDRYVSCCRKHWKEAMGLR.

ATP-binding positions include 9–16 and 87–90; these read SAMNAGKS and DEAQ. Catalysis depends on Glu-88, which acts as the Proton acceptor. Zn(2+) contacts are provided by Cys-145, Cys-147, Cys-182, and His-185.

Belongs to the thymidine kinase family. In terms of assembly, homotetramer.

Its subcellular location is the cytoplasm. It catalyses the reaction thymidine + ATP = dTMP + ADP + H(+). This Idiomarina loihiensis (strain ATCC BAA-735 / DSM 15497 / L2-TR) protein is Thymidine kinase.